The chain runs to 179 residues: Large ribosomal subunit protein uL5 (179 aa).

This sequence belongs to the universal ribosomal protein uL5 family. As to quaternary structure, part of the 50S ribosomal subunit; part of the 5S rRNA/L5/L18/L25 subcomplex. Contacts the 5S rRNA and the P site tRNA. Forms a bridge to the 30S subunit in the 70S ribosome.

Its function is as follows. This is one of the proteins that bind and probably mediate the attachment of the 5S RNA into the large ribosomal subunit, where it forms part of the central protuberance. In the 70S ribosome it contacts protein S13 of the 30S subunit (bridge B1b), connecting the 2 subunits; this bridge is implicated in subunit movement. Contacts the P site tRNA; the 5S rRNA and some of its associated proteins might help stabilize positioning of ribosome-bound tRNAs. This chain is Large ribosomal subunit protein uL5, found in Ruthia magnifica subsp. Calyptogena magnifica.